Consider the following 248-residue polypeptide: Cutinase (248 aa).

The signal sequence occupies residues 1–17 (MRSLAILTTLLAGHAFA). Residues 18–28 (YPKPAPQSVNR) constitute a propeptide that is removed on maturation. The segment at 31–70 (WPSINEFLSELAKVMPIGDTITAACDLISDGEDAAASLFG) is lid covering the active site of the uncomplexed enzyme. 2 disulfides stabilise this stretch: Cys-55-Cys-91 and Cys-79-Cys-153. Catalysis depends on Ser-164, which acts as the Nucleophile. Cys-212 and Cys-219 form a disulfide bridge. Asp-216 is a catalytic residue. The Proton donor/acceptor role is filled by His-229.

It belongs to the cutinase family.

Its subcellular location is the secreted. It carries out the reaction cutin + H2O = cutin monomers.. With respect to regulation, weakly inhibited by n-undecyl phosphonate (C11Y4). Activity unaffected by paraoxon. Functionally, catalyzes the hydrolysis of complex carboxylic polyesters found in the cell wall of plants. Degrades cutin, a macromolecule that forms the structure of the plant cuticle. The sequence is that of Cutinase from Hypocrea jecorina (strain QM6a) (Trichoderma reesei).